A 179-amino-acid polypeptide reads, in one-letter code: Inner membrane-spanning protein YciB (179 aa).

5 helical membrane passes run 3–23 (FLFD…FGIY), 49–69 (PMQW…ILLH), 76–96 (WKPT…VIGW), 121–141 (VAWA…AYQF), and 149–169 (FKLF…SIWL).

Belongs to the YciB family.

Its subcellular location is the cell inner membrane. Plays a role in cell envelope biogenesis, maintenance of cell envelope integrity and membrane homeostasis. The protein is Inner membrane-spanning protein YciB of Cupriavidus metallidurans (strain ATCC 43123 / DSM 2839 / NBRC 102507 / CH34) (Ralstonia metallidurans).